Here is a 35-residue protein sequence, read N- to C-terminus: Tau-theraphotoxin-Pc1b (35 aa).

Cystine bridges form between Cys3/Cys17, Cys10/Cys22, and Cys16/Cys29. At Phe35 the chain carries Phenylalanine amide.

It belongs to the neurotoxin 10 (Hwtx-1) family. 62 (Vatx) subfamily. As to expression, expressed by the venom gland.

The protein resides in the secreted. In terms of biological role, selectively activates the mammalian capsaicin receptor TRPV1, a non-selective cation channel expressed by sensory neurons of the pain pathway. Is more potent than VaTx1, but less potent than VaTx3. Interacts with distinct regions of the channel than capsaicin, since it only acts on the extracellular face of the channel, and capsaicin binds to the cytosolic side. Also activates avian TRPV1, which is insensitive to capsaicin. Produce weak inhibition on potassium channels Kv2.1/KCNB1. The polypeptide is Tau-theraphotoxin-Pc1b (Psalmopoeus cambridgei (Trinidad chevron tarantula)).